We begin with the raw amino-acid sequence, 468 residues long: Sushi repeat-containing protein SRPX2 (468 aa).

A signal peptide spans 1–25; it reads MMTSPLTQRGALSLLLLLMPAVTPT. 3 consecutive Sushi domains span residues 72-122, 123-181, and 265-324; these read ATCY…YCRQ, IRCH…VCVD, and RRCP…VCTP. 4 disulfides stabilise this stretch: cysteine 74–cysteine 108, cysteine 94–cysteine 120, cysteine 125–cysteine 166, and cysteine 152–cysteine 179. The 85-residue stretch at 180-264 folds into the HYR domain; that stretch reads VDIDPPKIRC…SCKFIVKVQV (85 aa). 2 cysteine pairs are disulfide-bonded: cysteine 267–cysteine 309 and cysteine 295–cysteine 322.

Forms homooligomers. Interacts with PLAUR (via the UPAR/Ly6 domains), ADAMTS4 and CTSB. Interacts with HGF; the interaction increases the mitogenic activity of HGF. Contains chondroitin sulfate chains. In terms of tissue distribution, expressed in angiogenic endothelial cells (at protein level).

It is found in the secreted. Its subcellular location is the cytoplasm. It localises to the cell surface. The protein localises to the synapse. Its function is as follows. Acts as a ligand for the urokinase plasminogen activator surface receptor. Plays a role in angiogenesis by inducing endothelial cell migration and the formation of vascular network (cords). Involved in cellular migration and adhesion. Increases the phosphorylation levels of FAK. Interacts with and increases the mitogenic activity of HGF. Promotes synapse formation. Required for ultrasonic vocalizations. The chain is Sushi repeat-containing protein SRPX2 (Srpx2) from Mus musculus (Mouse).